Consider the following 487-residue polypeptide: Alpha-1,4-L-rhamnosidase (487 aa).

The first 30 residues, 1–30, serve as a signal peptide directing secretion; that stretch reads MKNKKRLCHILKYIITCFLFGVIFIIPIQA. Glu-199 (proton donor) is an active-site residue.

Belongs to the glycosyl hydrolase 39 family.

It is found in the periplasm. Its function is as follows. Alpha-rhamnosidase involved in ulvan degradation. Ulvan is the main polysaccharide component of the Ulvales (green seaweed) cell wall. It is composed of disaccharide building blocks comprising 3-sulfated rhamnose (Rha3S) linked to D-glucuronic acid (GlcA), L-iduronic acid (IduA), or D-xylose (Xyl). Endo-acting alpha-1,4-L-rhamnosidase cleaves rhamnose sections interspersed between xylose residues within the polymer, degrading larger oligomers with consecutive Xyl-Rha3S units that are resistant to the ulvan lyases and producing dimers Xyl-Rha3S and Xyl2S-Rha3S as the smallest products. The protein is Alpha-1,4-L-rhamnosidase of Formosa agariphila (strain DSM 15362 / KCTC 12365 / LMG 23005 / KMM 3901 / M-2Alg 35-1).